A 174-amino-acid polypeptide reads, in one-letter code: MTLILGIDPGSRITGYGVVRDTGRGCVYVASGCIRTGSGELHERLQIVYRGVREVIKTYEPVTMGIEKVFMARNADSALKLGQARGAAIVAGAEEALEIAEYTATQVKQAVAGTGGANKEQVMMMVMHLLKLTQKPQIDASDALAIALCHAHTRSSLIPHGLGTARSRGGRLRL.

Residues D8, E67, and D139 contribute to the active site. Residues D8, E67, and D139 each contribute to the Mg(2+) site.

It belongs to the RuvC family. In terms of assembly, homodimer which binds Holliday junction (HJ) DNA. The HJ becomes 2-fold symmetrical on binding to RuvC with unstacked arms; it has a different conformation from HJ DNA in complex with RuvA. In the full resolvosome a probable DNA-RuvA(4)-RuvB(12)-RuvC(2) complex forms which resolves the HJ. It depends on Mg(2+) as a cofactor.

The protein resides in the cytoplasm. The enzyme catalyses Endonucleolytic cleavage at a junction such as a reciprocal single-stranded crossover between two homologous DNA duplexes (Holliday junction).. Its function is as follows. The RuvA-RuvB-RuvC complex processes Holliday junction (HJ) DNA during genetic recombination and DNA repair. Endonuclease that resolves HJ intermediates. Cleaves cruciform DNA by making single-stranded nicks across the HJ at symmetrical positions within the homologous arms, yielding a 5'-phosphate and a 3'-hydroxyl group; requires a central core of homology in the junction. The consensus cleavage sequence is 5'-(A/T)TT(C/G)-3'. Cleavage occurs on the 3'-side of the TT dinucleotide at the point of strand exchange. HJ branch migration catalyzed by RuvA-RuvB allows RuvC to scan DNA until it finds its consensus sequence, where it cleaves and resolves the cruciform DNA. The protein is Crossover junction endodeoxyribonuclease RuvC of Pseudomonas syringae pv. syringae (strain B728a).